A 263-amino-acid chain; its full sequence is Taurine import ATP-binding protein TauB (263 aa).

Residues 4–235 (LTAEAISLSF…RYAAGETVRS (232 aa)) form the ABC transporter domain. Residue 40–47 (GPSGCGKS) coordinates ATP.

The protein belongs to the ABC transporter superfamily. Taurine importer (TC 3.A.1.17.1) family. The complex is composed of two ATP-binding proteins (TauB), two transmembrane proteins (TauC) and a solute-binding protein (TauA).

It is found in the cell inner membrane. It catalyses the reaction taurine(out) + ATP + H2O = taurine(in) + ADP + phosphate + H(+). Its function is as follows. Part of the ABC transporter complex TauABC involved in taurine import. Responsible for energy coupling to the transport system. The chain is Taurine import ATP-binding protein TauB from Pseudomonas aeruginosa (strain ATCC 15692 / DSM 22644 / CIP 104116 / JCM 14847 / LMG 12228 / 1C / PRS 101 / PAO1).